The following is a 371-amino-acid chain: Protein SPATA31F3 (371 aa).

The chain crosses the membrane as a helical span at residues 7-29 (ILWDVGSSVYTYGSLFIIALIIW). The stretch at 62–86 (LRVKKRTTKEETEKLQKLLSNMKRQ) forms a coiled coil. Composition is skewed to polar residues over residues 189 to 203 (LSKVLNDQSSELSSQ) and 244 to 266 (PQQQPEPQGSNAFQDVSGLSSSS). Disordered regions lie at residues 189–222 (LSKVLNDQSSELSSQHSKDISLPPKFMQSQSTDQ), 240–299 (YHPA…EAEM), and 326–371 (YKSE…KRNI). Residues serine 197 and serine 198 each carry the phosphoserine modification. Positions 277–287 (QKKRKKTKKLV) are enriched in basic residues. The segment covering 330 to 362 (TGAKPKTGEPKKSSAKVRAEEPNLEKHAKDLKA) has biased composition (basic and acidic residues).

The protein belongs to the SPATA31 family.

The protein resides in the membrane. In Mus musculus (Mouse), this protein is Protein SPATA31F3 (Spata31f3).